Consider the following 169-residue polypeptide: Cilia- and flagella-associated protein 276 (169 aa).

Disordered regions lie at residues 26-45 (SKKL…EPWS) and 150-169 (HTAA…FFST). The segment covering 36–45 (HLAQQQEPWS) has biased composition (polar residues). Positions 160–169 (RKKDGGFFST) are enriched in basic and acidic residues.

As to quaternary structure, microtubule inner protein component of sperm flagellar doublet microtubules. As to expression, expressed in cerebrum, cerebellum, gastrocnemius muscle, spinal cord and lung tissues.

Its subcellular location is the cytoplasm. The protein resides in the cytoskeleton. The protein localises to the flagellum axoneme. It is found in the cilium axoneme. Its function is as follows. Microtubule inner protein (MIP) part of the dynein-decorated doublet microtubules (DMTs) in cilia axoneme, which is required for motile cilia beating. May play an important role for the maintenance of myelin-axon integrity. May affect intracellular Ca(2+) homeostasis. In Homo sapiens (Human), this protein is Cilia- and flagella-associated protein 276.